The primary structure comprises 252 residues: MKTVTVKDLVIGAGAPKIIVSLMAKDIARVKSEALAYREADFDILEWRVDHFADLSNVESVMAAAKILRETMPEKPLLFTFRSAKEGGEQAISTEAYIALNRAAIDSGLVDMIDLELFTGDDQVKETVAYAHAHDVKVVMSNHDFHKTPEAEEIIARLRKMQSFDADIPKIALMPQSTSDVLTLLAATLEMQEQYADRPIITMSMAKTGVISRLAGEVFGSAATFGAVKKASAPGQISVTDLRTVLTILHQA.

3-dehydroquinate is bound by residues serine 21, 46–48, and arginine 82; that span reads EWR. Catalysis depends on histidine 143, which acts as the Proton donor/acceptor. Lysine 170 serves as the catalytic Schiff-base intermediate with substrate. 3-dehydroquinate-binding residues include arginine 213, serine 232, and glutamine 236.

The protein belongs to the type-I 3-dehydroquinase family. In terms of assembly, homodimer.

The catalysed reaction is 3-dehydroquinate = 3-dehydroshikimate + H2O. Its pathway is metabolic intermediate biosynthesis; chorismate biosynthesis; chorismate from D-erythrose 4-phosphate and phosphoenolpyruvate: step 3/7. In terms of biological role, involved in the third step of the chorismate pathway, which leads to the biosynthesis of aromatic amino acids. Catalyzes the cis-dehydration of 3-dehydroquinate (DHQ) and introduces the first double bond of the aromatic ring to yield 3-dehydroshikimate. The protein is 3-dehydroquinate dehydratase of Escherichia coli O9:H4 (strain HS).